A 64-amino-acid chain; its full sequence is Disintegrin VB7B (64 aa).

A Disintegrin domain is found at 1-64 (ELLQNSGNPC…TGISSDCPRN (64 aa)). 4 cysteine pairs are disulfide-bonded: C10–C33, C24–C30, C29–C54, and C42–C61. A Cell attachment site; atypical (KGD) motif is present at residues 46-48 (KGD).

The protein belongs to the venom metalloproteinase (M12B) family. P-II subfamily. P-IIe sub-subfamily. As to quaternary structure, heterodimer with VB7A; disulfide-linked. In terms of tissue distribution, expressed by the venom gland.

It is found in the secreted. Functionally, poor inhibitor of platelet aggregation. The disintegrin inhibits the adhesion of cells expressing the RGD-dependent integrin alpha-5/beta-1 (ITGA5/ITGB1) to immobilized fibronectin. Inhibition on alpha-IIb/beta-3 (ITGA2B/ITGB3) is low. This Vipera berus berus (Common viper) protein is Disintegrin VB7B.